The following is a 468-amino-acid chain: ERO1-like protein alpha (468 aa).

The signal sequence occupies residues 1–23 (MGHRWGFLIVFLGAVGLLGSGYG). Disulfide bonds link cysteine 35/cysteine 48, cysteine 37/cysteine 46, cysteine 85/cysteine 391, cysteine 94/cysteine 99, cysteine 94/cysteine 131, cysteine 99/cysteine 104, cysteine 208/cysteine 241, and cysteine 394/cysteine 397. Serine 106, serine 143, and serine 145 each carry phosphoserine. The FAD site is built by arginine 187, threonine 189, and tryptophan 200. Serine 252 and histidine 255 together coordinate FAD. An N-linked (GlcNAc...) asparagine glycan is attached at asparagine 280. Positions 287 and 300 each coordinate FAD. Asparagine 384 carries an N-linked (GlcNAc...) asparagine glycan.

This sequence belongs to the EROs family. Predominantly monomer. May function both as a monomer and a homodimer. Interacts with PDILT. Interacts with ERP44; the interaction results in retention of ERO1A in the endoplasmic reticulum. FAD serves as cofactor. In terms of processing, the Cys-94/Cys-99 and Cys-394/Cys-397 disulfide bonds constitute the redox-active center. The Cys-94/Cys-99 disulfide bond may accept electron from P4HB and funnel them to the active site disulfide Cys-394/Cys-397. The regulatory Cys-99/Cys-104 disulfide bond stabilizes the other regulatory bond Cys-94/Cys-131. Phosphorylated on Ser-145 by FAM20C in the Golgi which increases its enzymatic activity. Phosphorylation is induced by lactation. It is also induced by hypoxia and reductive stress.

The protein resides in the endoplasmic reticulum membrane. It localises to the golgi apparatus lumen. It is found in the secreted. The protein localises to the cell projection. Its subcellular location is the dendrite. Its activity is regulated as follows. Enzyme activity is tightly regulated to prevent the accumulation of reactive oxygen species in the endoplasmic reticulum. Reversibly down-regulated by the formation of disulfide bonds between the active site Cys-94 and Cys-131, and between Cys-99 and Cys-104. Glutathione may be required to regulate its activity in the endoplasmic reticulum. Its function is as follows. Oxidoreductase involved in disulfide bond formation in the endoplasmic reticulum. Efficiently reoxidizes P4HB/PDI, the enzyme catalyzing protein disulfide formation, in order to allow P4HB to sustain additional rounds of disulfide formation. Following P4HB reoxidation, passes its electrons to molecular oxygen via FAD, leading to the production of reactive oxygen species (ROS) in the cell. Required for the proper folding of immunoglobulins. Plays an important role in ER stress-induced, CHOP-dependent apoptosis by activating the inositol 1,4,5-trisphosphate receptor IP3R1. In Sus scrofa (Pig), this protein is ERO1-like protein alpha.